The sequence spans 287 residues: uncharacterized protein (287 aa).

Positions 115 to 287 constitute an ATP-grasp domain; that stretch reads PQNFDREWNP…NLAIELLKAI (173 aa). ATP is bound by residues lysine 145 and 178–188; that span reads QKYITCSKGES. Mg(2+) contacts are provided by aspartate 248, glutamate 261, and asparagine 263. Residues aspartate 248, glutamate 261, and asparagine 263 each coordinate Mn(2+).

It belongs to the RimK family.

This is an uncharacterized protein from Mycoplasma genitalium (strain ATCC 33530 / DSM 19775 / NCTC 10195 / G37) (Mycoplasmoides genitalium).